A 167-amino-acid chain; its full sequence is Crossover junction endodeoxyribonuclease RuvC (167 aa).

Residues D11, E71, and D143 contribute to the active site. Positions 11, 71, and 143 each coordinate Mg(2+).

This sequence belongs to the RuvC family. Homodimer which binds Holliday junction (HJ) DNA. The HJ becomes 2-fold symmetrical on binding to RuvC with unstacked arms; it has a different conformation from HJ DNA in complex with RuvA. In the full resolvosome a probable DNA-RuvA(4)-RuvB(12)-RuvC(2) complex forms which resolves the HJ. It depends on Mg(2+) as a cofactor.

It localises to the cytoplasm. It catalyses the reaction Endonucleolytic cleavage at a junction such as a reciprocal single-stranded crossover between two homologous DNA duplexes (Holliday junction).. In terms of biological role, the RuvA-RuvB-RuvC complex processes Holliday junction (HJ) DNA during genetic recombination and DNA repair. Endonuclease that resolves HJ intermediates. Cleaves cruciform DNA by making single-stranded nicks across the HJ at symmetrical positions within the homologous arms, yielding a 5'-phosphate and a 3'-hydroxyl group; requires a central core of homology in the junction. The consensus cleavage sequence is 5'-(A/T)TT(C/G)-3'. Cleavage occurs on the 3'-side of the TT dinucleotide at the point of strand exchange. HJ branch migration catalyzed by RuvA-RuvB allows RuvC to scan DNA until it finds its consensus sequence, where it cleaves and resolves the cruciform DNA. This is Crossover junction endodeoxyribonuclease RuvC from Hyphomonas neptunium (strain ATCC 15444).